Reading from the N-terminus, the 258-residue chain is Indole-3-glycerol phosphate synthase (258 aa).

Belongs to the TrpC family.

It catalyses the reaction 1-(2-carboxyphenylamino)-1-deoxy-D-ribulose 5-phosphate + H(+) = (1S,2R)-1-C-(indol-3-yl)glycerol 3-phosphate + CO2 + H2O. Its pathway is amino-acid biosynthesis; L-tryptophan biosynthesis; L-tryptophan from chorismate: step 4/5. This Chlorobium phaeobacteroides (strain DSM 266 / SMG 266 / 2430) protein is Indole-3-glycerol phosphate synthase.